Reading from the N-terminus, the 2211-residue chain is Orsellinic acid synthase (2211 aa).

The segment at 44–246 (TFREQVSDAI…TVAVVHSLYH (203 aa)) is N-terminal acylcarrier protein transacylase domain (SAT). Residues 380–805 (WDDIAIVGMA…GSNAAVIIGE (426 aa)) enclose the Ketosynthase family 3 (KS3) domain. Residues Cys-549, His-684, and His-724 each act as for beta-ketoacyl synthase activity in the active site. A malonyl-CoA:ACP transacylase (MAT) domain region spans residues 910-1228 (VFIFSGQGSQ…QLTTLKKNVP (319 aa)). The active-site For acyl/malonyl transferase activity is Ser-1006. The segment at 1309 to 1440 (HAIQKLSHGA…GVVKQSNMAS (132 aa)) is N-terminal hotdog fold. Residues 1309–1629 (HAIQKLSHGA…FQHVKIPLIE (321 aa)) form the PKS/mFAS DH domain. The product template (PT) domain stretch occupies residues 1334–1573 (EFIEGHLVCG…GATTLRAPVV (240 aa)). The active-site Proton acceptor; for dehydratase activity is His-1339. Residues 1473–1629 (VQVFSKRAMY…FQHVKIPLIE (157 aa)) form a C-terminal hotdog fold region. The Proton donor; for dehydratase activity role is filled by Asp-1537. Carrier domains lie at 1681 to 1755 (AAPE…EALS) and 1787 to 1865 (STVD…VKRP). Ser-1715 carries the O-(pantetheine 4'-phosphoryl)serine modification. Residues 1755-1786 (SPTPVGNDVDNDSPTPGSERGSDSAISTPASV) form a disordered region. At Ser-1824 the chain carries O-(pantetheine 4'-phosphoryl)serine. The interval 1937–2204 (SGKSPLFLIH…AAVSAALVDA (268 aa)) is thioesterase (TE) domain.

The enzyme catalyses 3 malonyl-CoA + acetyl-CoA + 2 H(+) = orsellinate + 3 CO2 + 4 CoA. Its pathway is secondary metabolite biosynthesis. Non-reducing polyketide synthase; part of the gene cluster that mediates the biosynthesis of the bibenzoquinone oosporein, a metabolite required for fungal virulence that acts by evading host immunity to facilitate fungal multiplication in insects. The non-reducing polyketide synthase OpS1 produces orsellinic acid by condensing acetyl-CoA with 3 malonyl-CoA units. Orsellinic acid is then hydroxylated to benzenetriol by the hydroxylase OpS4. The intermediate is oxidized either nonenzymatically to 5,5'-dideoxy-oosporein or enzymatically to benzenetetrol by the oxidoreductase OpS7. The latter is further dimerized to oosporein by the catalase OpS5. OpS6 probably functions en route for protecting cells against oxidative stress by scavenging any leaked free radical form of benzenetetrol by activating the thiol group of glutathione. The protein is Orsellinic acid synthase of Beauveria bassiana (strain ARSEF 2860) (White muscardine disease fungus).